A 345-amino-acid polypeptide reads, in one-letter code: D-erythrose-4-phosphate dehydrogenase (345 aa).

Residue 11-12 coordinates NAD(+); it reads RI. Residues 158–160, R204, 217–218, and R240 contribute to the substrate site; these read SCT and TK. The active-site Nucleophile is the C159. N322 is a binding site for NAD(+).

The protein belongs to the glyceraldehyde-3-phosphate dehydrogenase family. Epd subfamily. Homotetramer.

Its subcellular location is the cytoplasm. It carries out the reaction D-erythrose 4-phosphate + NAD(+) + H2O = 4-phospho-D-erythronate + NADH + 2 H(+). The protein operates within cofactor biosynthesis; pyridoxine 5'-phosphate biosynthesis; pyridoxine 5'-phosphate from D-erythrose 4-phosphate: step 1/5. Functionally, catalyzes the NAD-dependent conversion of D-erythrose 4-phosphate to 4-phosphoerythronate. In Vibrio campbellii (strain ATCC BAA-1116), this protein is D-erythrose-4-phosphate dehydrogenase.